The following is a 312-amino-acid chain: Pyrimidine-specific ribonucleoside hydrolase RihA (312 aa).

Residue histidine 240 is part of the active site.

The protein belongs to the IUNH family. RihA subfamily.

In terms of biological role, hydrolyzes cytidine or uridine to ribose and cytosine or uracil, respectively. The sequence is that of Pyrimidine-specific ribonucleoside hydrolase RihA from Shewanella woodyi (strain ATCC 51908 / MS32).